The chain runs to 1342 residues: DNA-directed RNA polymerase subunit beta (1342 aa).

This sequence belongs to the RNA polymerase beta chain family. As to quaternary structure, the RNAP catalytic core consists of 2 alpha, 1 beta, 1 beta' and 1 omega subunit. When a sigma factor is associated with the core the holoenzyme is formed, which can initiate transcription.

The catalysed reaction is RNA(n) + a ribonucleoside 5'-triphosphate = RNA(n+1) + diphosphate. Functionally, DNA-dependent RNA polymerase catalyzes the transcription of DNA into RNA using the four ribonucleoside triphosphates as substrates. This chain is DNA-directed RNA polymerase subunit beta, found in Aeromonas hydrophila subsp. hydrophila (strain ATCC 7966 / DSM 30187 / BCRC 13018 / CCUG 14551 / JCM 1027 / KCTC 2358 / NCIMB 9240 / NCTC 8049).